Reading from the N-terminus, the 511-residue chain is MTGDVILQISNLTKSFGPVKALKGVDFELRRGEIHAIAGENGAGKSTLMNIIDGILQPDSGEIRLDGTPVEIPSPAAAQKMGIGFVHQEIALCPDVSVAENIFMAATNSSRSFLMDYKGIEAKAREVFAQLSSIDPSVLVRDLSISNQQLVEIAKALTLDCRVLILDEPTAALTEAEAQVLFKIMRRLADQGISLIYISHRMVEIFDNCDRVSVFRDGRYVTTQDVAKITPADVVRAMVGREIGDLYPEKQRPEACSTTEVLRVENLCEAERFHDVSFSLHKGEILGFAGLIGAGRSEIAKGVCALEGQVTGRLWLNGEPLALRDYQDSIDAGIVYLSEDRKGDGVFLDMSIASNVSALKVEQVASALGLIQPGREIEQADRLGRKLNLKCGTLQDPVSSLSGGNQQKVALAKMLSVNPRLIFLDEPTRGVDVGAKAEIYRILRDLAEEGAGIVVISSELPELIGLCDRVLVIHEGCLSGEVSGPDMTEENIMHLASGTQQGTGAASVAAQ.

ABC transporter domains follow at residues L7–E242 and C256–Q500. An ATP-binding site is contributed by G39–S46.

This sequence belongs to the ABC transporter superfamily. Ribose importer (TC 3.A.1.2.1) family. As to quaternary structure, the complex is composed of an ATP-binding protein (RbsA), two transmembrane proteins (RbsC) and a solute-binding protein (RbsB).

The protein localises to the cell inner membrane. It carries out the reaction D-ribose(out) + ATP + H2O = D-ribose(in) + ADP + phosphate + H(+). In terms of biological role, part of the ABC transporter complex RbsABC involved in ribose import. Responsible for energy coupling to the transport system. This Ruegeria sp. (strain TM1040) (Silicibacter sp.) protein is Ribose import ATP-binding protein RbsA.